The chain runs to 212 residues: Ribosomal RNA small subunit methyltransferase G (212 aa).

S-adenosyl-L-methionine contacts are provided by residues F78, 96-98, 124-125, and R141; these read ESS and VE.

Belongs to the methyltransferase superfamily. RNA methyltransferase RsmG family.

It is found in the cytoplasm. Functionally, specifically methylates the N7 position of a guanine in 16S rRNA. This chain is Ribosomal RNA small subunit methyltransferase G, found in Onion yellows phytoplasma (strain OY-M).